The following is a 363-amino-acid chain: 3-isopropylmalate dehydrogenase (363 aa).

78–91 lines the NAD(+) pocket; sequence GKKWDYLPIESRPE. Substrate is bound by residues arginine 99, arginine 109, arginine 138, and aspartate 227. Residues aspartate 227, aspartate 251, and aspartate 255 each coordinate Mg(2+). 285–297 is a binding site for NAD(+); it reads GSAPDIEGKNIAN.

The protein belongs to the isocitrate and isopropylmalate dehydrogenases family. LeuB type 1 subfamily. As to quaternary structure, homodimer. It depends on Mg(2+) as a cofactor. The cofactor is Mn(2+).

It is found in the cytoplasm. The enzyme catalyses (2R,3S)-3-isopropylmalate + NAD(+) = 4-methyl-2-oxopentanoate + CO2 + NADH. Its pathway is amino-acid biosynthesis; L-leucine biosynthesis; L-leucine from 3-methyl-2-oxobutanoate: step 3/4. In terms of biological role, catalyzes the oxidation of 3-carboxy-2-hydroxy-4-methylpentanoate (3-isopropylmalate) to 3-carboxy-4-methyl-2-oxopentanoate. The product decarboxylates to 4-methyl-2 oxopentanoate. The sequence is that of 3-isopropylmalate dehydrogenase from Buchnera aphidicola subsp. Schizaphis graminum (strain Sg).